Reading from the N-terminus, the 400-residue chain is Cytochrome b (400 aa).

Transmembrane regions (helical) follow at residues 32–52 (FGSL…TLAM), 76–98 (WLIR…LHIG), 113–133 (TWSI…LGYV), and 179–199 (FFSL…MHLI). H82 and H96 together coordinate heme b. 2 residues coordinate heme b: H183 and H197. H202 contacts a ubiquinone. Transmembrane regions (helical) follow at residues 226–246 (YLFK…IFVF), 290–310 (AVGV…PYLD), 322–342 (LSKV…QLGA), and 349–369 (FIVF…IIIP).

This sequence belongs to the cytochrome b family. Fungal cytochrome b-c1 complex contains 10 subunits; 3 respiratory subunits, 2 core proteins and 5 low-molecular weight proteins. Cytochrome b-c1 complex is a homodimer. Heme b serves as cofactor.

Its subcellular location is the mitochondrion inner membrane. Functionally, component of the ubiquinol-cytochrome c reductase complex (complex III or cytochrome b-c1 complex) that is part of the mitochondrial respiratory chain. The b-c1 complex mediates electron transfer from ubiquinol to cytochrome c. Contributes to the generation of a proton gradient across the mitochondrial membrane that is then used for ATP synthesis. This Epidermophyton floccosum protein is Cytochrome b (cob).